We begin with the raw amino-acid sequence, 585 residues long: Cytidine monophosphate-N-acetylneuraminic acid hydroxylase (585 aa).

Positions 9-107 (LSPVEVANLK…VEMDENNRLL (99 aa)) constitute a Rieske domain. Residues cysteine 49, histidine 51, cysteine 70, and histidine 73 each contribute to the [2Fe-2S] cluster site.

The protein belongs to the CMP-Neu5Ac hydroxylase family. Requires [2Fe-2S] cluster as cofactor.

Its subcellular location is the cytoplasm. The catalysed reaction is CMP-N-acetyl-beta-neuraminate + 2 Fe(II)-[cytochrome b5] + O2 + 2 H(+) = CMP-N-glycoloyl-beta-neuraminate + 2 Fe(III)-[cytochrome b5] + H2O. It participates in amino-sugar metabolism; N-acetylneuraminate metabolism. In terms of biological role, sialic acids are components of carbohydrate chains of glycoconjugates and are involved in cell-cell recognition and cell-pathogen interactions. Catalyzes the conversion of CMP-N-acetylneuraminic acid (CMP-Neu5Ac) into its hydroxylated derivative CMP-N-glycolylneuraminic acid (CMP-Neu5Gc), a sialic acid abundantly expressed at the surface of many cells. This Pongo pygmaeus (Bornean orangutan) protein is Cytidine monophosphate-N-acetylneuraminic acid hydroxylase (CMAH).